We begin with the raw amino-acid sequence, 481 residues long: Argininosuccinate lyase (481 aa).

Belongs to the lyase 1 family. Argininosuccinate lyase subfamily.

It localises to the cytoplasm. The enzyme catalyses 2-(N(omega)-L-arginino)succinate = fumarate + L-arginine. Its pathway is amino-acid biosynthesis; L-arginine biosynthesis; L-arginine from L-ornithine and carbamoyl phosphate: step 3/3. This is Argininosuccinate lyase from Methanococcus vannielii (strain ATCC 35089 / DSM 1224 / JCM 13029 / OCM 148 / SB).